The sequence spans 444 residues: C4-dicarboxylate transport protein (444 aa).

Transmembrane regions (helical) follow at residues 21-41 (HLYVQVLVAIAAGILLGHFYP), 57-77 (LVKMIIAPVIFLTVATGIAGM), 92-112 (IYFLTFSTLALIIGLIVANVV), 161-181 (GDILQVLFFSVLFGIALALVG), 201-221 (LVSILMKAAPIGAFGAMAFTI), 234-254 (LLIGTFYLTALLFVLVVLGAV), 320-340 (IYMTLAALFIAQATDIPLSLS), 345-365 (LLLVAMLSSKGAAGITGAGFI), and 368-388 (AATLSVVPAVPVAGMALILGI).

It belongs to the dicarboxylate/amino acid:cation symporter (DAACS) (TC 2.A.23) family.

Its subcellular location is the cell inner membrane. In terms of biological role, responsible for the transport of dicarboxylates such as succinate, fumarate, and malate from the periplasm across the membrane. In Brucella anthropi (strain ATCC 49188 / DSM 6882 / CCUG 24695 / JCM 21032 / LMG 3331 / NBRC 15819 / NCTC 12168 / Alc 37) (Ochrobactrum anthropi), this protein is C4-dicarboxylate transport protein.